The chain runs to 44 residues: Photosystem I reaction center subunit IX (44 aa).

The chain crosses the membrane as a helical span at residues 7 to 27 (YLSVAPVLATLWFGSLAGLLI).

The protein belongs to the PsaJ family.

The protein resides in the plastid. It localises to the chloroplast thylakoid membrane. Functionally, may help in the organization of the PsaE and PsaF subunits. This is Photosystem I reaction center subunit IX from Illicium oligandrum (Star anise).